The following is a 508-amino-acid chain: Cobalamin biosynthesis protein CobIJ (508 aa).

A precorrin-2 C20-methyltransferase region spans residues 1 to 243 (MSARGTLWGV…AMLPGGRRRA (243 aa)). A precorrin-3 methylase region spans residues 244–508 (LLTGTVAVVG…TATKSSRHSD (265 aa)). The segment at 489–508 (PRRYPEAGRATATKSSRHSD) is disordered.

Belongs to the precorrin methyltransferase family.

The catalysed reaction is precorrin-2 + S-adenosyl-L-methionine = precorrin-3A + S-adenosyl-L-homocysteine + H(+). The enzyme catalyses precorrin-3B + S-adenosyl-L-methionine = precorrin-4 + S-adenosyl-L-homocysteine + 3 H(+). The protein operates within cofactor biosynthesis; adenosylcobalamin biosynthesis; cob(II)yrinate a,c-diamide from precorrin-2 (aerobic route): step 1/10. It functions in the pathway cofactor biosynthesis; adenosylcobalamin biosynthesis; cob(II)yrinate a,c-diamide from precorrin-2 (aerobic route): step 3/10. Methylates precorrin-2 at the C-20 position to produce precorrin-3A. This is Cobalamin biosynthesis protein CobIJ (cobIJ) from Mycobacterium bovis (strain ATCC BAA-935 / AF2122/97).